The following is an 85-amino-acid chain: Alpha-toxin BmalphaTx47 (85 aa).

An N-terminal signal peptide occupies residues 1 to 19 (MNYLIVISFALLLMTGVQS). The region spanning 21 to 83 (RDAYIADSEN…VPIRISGSCR (63 aa)) is the LCN-type CS-alpha/beta domain. Cystine bridges form between cysteine 31–cysteine 82, cysteine 35–cysteine 55, cysteine 41–cysteine 65, and cysteine 45–cysteine 67.

This sequence belongs to the long (4 C-C) scorpion toxin superfamily. Sodium channel inhibitor family. Alpha subfamily. As to expression, expressed by the venom gland.

Its subcellular location is the secreted. Alpha toxins bind voltage-independently at site-3 of sodium channels (Nav) and inhibit the inactivation of the activated channels, thereby blocking neuronal transmission. This toxin expressed with the pET-14b vector has low inhibitory activity on sodium channels (11.33% on rNav1.2/SCN2A, 15.96% on mNav1.4/SCN4A and 5.04% on hNav1.5/SCN5A). When expressed with the pET-28a vector, this toxin has higher inhibitory activities (44.12% on rNav1.2/SCN2A, 25.40% on mNav1.4/SCN4A and 65.34% on hNav1.5/SCN5A). The sequence is that of Alpha-toxin BmalphaTx47 from Olivierus martensii (Manchurian scorpion).